Reading from the N-terminus, the 408-residue chain is Glyceraldehyde-3-phosphate dehydrogenase, testis-specific (408 aa).

A testis-specific N-terminal extension region spans residues 1 to 73 (MSKRDIVLTN…TPPPKMVSVA (73 aa)). A disordered region spans residues 19–68 (QPCPVTRAPPPPEPKAEVEPQPQPEPTPVREEIKPPPPPLPPHPATPPPK). The span at 53–68 (PPPPPLPPHPATPPPK) shows a compositional bias: pro residues. Residues 85 to 86 (RI), aspartate 106, lysine 151, tyrosine 173, and serine 193 contribute to the NAD(+) site. D-glyceraldehyde 3-phosphate contacts are provided by residues 223-225 (SCT), threonine 254, 283-284 (TG), and arginine 306. Cysteine 224 functions as the Nucleophile in the catalytic mechanism. Position 388 (asparagine 388) interacts with NAD(+).

It belongs to the glyceraldehyde-3-phosphate dehydrogenase family. In terms of assembly, homotetramer. Interacts with ARRB2; the interaction is detected in the nucleus upon OR1D2 stimulation. In terms of tissue distribution, testis specific.

It localises to the cytoplasm. It catalyses the reaction D-glyceraldehyde 3-phosphate + phosphate + NAD(+) = (2R)-3-phospho-glyceroyl phosphate + NADH + H(+). Its pathway is carbohydrate degradation; glycolysis; pyruvate from D-glyceraldehyde 3-phosphate: step 1/5. Functionally, may play an important role in regulating the switch between different pathways for energy production during spermiogenesis and in the spermatozoon. Required for sperm motility and male fertility. This Homo sapiens (Human) protein is Glyceraldehyde-3-phosphate dehydrogenase, testis-specific (GAPDHS).